The sequence spans 137 residues: Large ribosomal subunit protein uL16 (137 aa).

Residues 1–17 are compositionally biased toward basic residues; it reads MLQPKRTKFRKTHKGRN. The segment at 1 to 24 is disordered; sequence MLQPKRTKFRKTHKGRNRGLANSG.

The protein belongs to the universal ribosomal protein uL16 family. As to quaternary structure, part of the 50S ribosomal subunit.

Its function is as follows. Binds 23S rRNA and is also seen to make contacts with the A and possibly P site tRNAs. The chain is Large ribosomal subunit protein uL16 from Aeromonas hydrophila subsp. hydrophila (strain ATCC 7966 / DSM 30187 / BCRC 13018 / CCUG 14551 / JCM 1027 / KCTC 2358 / NCIMB 9240 / NCTC 8049).